The sequence spans 365 residues: Peptide chain release factor 2 (365 aa).

N5-methylglutamine is present on Gln251.

This sequence belongs to the prokaryotic/mitochondrial release factor family. Methylated by PrmC. Methylation increases the termination efficiency of RF2.

The protein resides in the cytoplasm. In terms of biological role, peptide chain release factor 2 directs the termination of translation in response to the peptide chain termination codons UGA and UAA. The protein is Peptide chain release factor 2 of Campylobacter jejuni subsp. jejuni serotype O:2 (strain ATCC 700819 / NCTC 11168).